We begin with the raw amino-acid sequence, 1522 residues long: Rho guanine nucleotide exchange factor 11 (1522 aa).

Residues 1-40 are disordered; the sequence is MSVRLPQSIDRLSSLSSLGDSAPERKSPSHHRQPSDASET. A phosphoserine mark is found at Ser2, Ser14, Ser16, and Ser35. The region spanning 47–126 is the PDZ domain; the sequence is CVIIQKDQHG…LTLLGSSPSS (80 aa). Disordered regions lie at residues 128–175 and 200–231; these read GISG…PEVQ and YGDTSQRPSEGRLSLDSQEGDSGLDSGTERFP. Residues 149-161 show a composition bias toward pro residues; that stretch reads PSPPPPPPLPPPQ. A phosphoserine mark is found at Ser245 and Ser251. Phosphothreonine is present on Thr254. Residues Ser255 and Ser271 each carry the phosphoserine modification. The disordered stretch occupies residues 263–286; that stretch reads AQHHRRQGSDAAVPSTGDQGVDQS. An RGSL domain is found at 306–486; the sequence is ESDIIFQDLE…NTYMSHAGIR (181 aa). The stretch at 444-470 forms a coiled coil; it reads LRERQVAEKQLAALGDILSKYEEDRSA. Positions 490-555 are disordered; sequence ARPSNTAEKA…SSQSTFHIPL (66 aa). The segment covering 521-533 has biased composition (basic and acidic residues); that stretch reads SKKEKDALEDKKR. 3 positions are modified to phosphoserine: Ser556, Ser635, and Ser663. The interval 573-680 is disordered; the sequence is ENNQQYDAPE…FTPKMGRRSI (108 aa). Positions 601–637 are enriched in basic and acidic residues; sequence DSSRSEIRLGRSESLKGREEMKRSRKAENVPRSRSDV. The segment covering 651-664 has biased composition (low complexity); sequence SASSSTSSLSTRSL. Thr668 and Thr672 each carry phosphothreonine. The DH domain occupies 734–923; it reads DRQEVINELF…REILKYVNEA (190 aa). One can recognise a PH domain in the interval 965 to 1079; that stretch reads KMIHEGPLTW…WMELLEEAVR (115 aa). Residues 1084–1141 are disordered; it reads HPGAAPMPVHPPPPGPREPAQQGPTPSRVELDDSDVFHGEPEPEELPGGTGSQQRVQG. A compositionally biased stretch (pro residues) spans 1091–1100; the sequence is PVHPPPPGPR. Residues 1112 to 1124 show a composition bias toward basic and acidic residues; it reads VELDDSDVFHGEP. Phosphoserine is present on Ser1155. 3 disordered regions span residues 1223-1320, 1332-1423, and 1453-1522; these read ETQA…AGGY, KVVP…RDVG, and LGGE…SPGP. Positions 1236–1245 are enriched in polar residues; that stretch reads PTPSVISVTS. Residues Ser1295 and Ser1300 each carry the phosphoserine modification. Low complexity predominate over residues 1338–1353; the sequence is PESGQSEPGPPEVEGG. Phosphoserine is present on residues Ser1457 and Ser1458. Thr1462 and Thr1475 each carry phosphothreonine. At Ser1480 the chain carries Phosphoserine. Over residues 1503-1513 the composition is skewed to acidic residues; the sequence is DGSDAPLEDST.

In terms of assembly, interacts with GNA12 and GNA13 through the RGS domain. Interacts with RHOA, PLXNB1 and PLXNB2. Interacts with SLC1A6. Interacts (via DH domain) with GCSAM (via C-terminus). Found in a complex with ARHGEF11 and ARHGEF12; binding to ARHGEF11 and ARHGEF12 enhances CDC42 GEF activity of PLEKHG4B, and PLEKHG4B, in turn, inhibits ARHGEF11- and ARHGEF12-mediated RHOA activation. Phosphorylated by MAP kinase p38 (MAPK11, MAPK12, MAPK13 and/or MAPK14). Post-translationally, ubiquitinated by the BCR(KLHL20) E3 ubiquitin ligase complex when previously phosphorylated by MAP kinase p38 (MAPK11, MAPK12, MAPK13 and/or MAPK14), leading to its degradation, thereby restricting RhoA activity and facilitating growth cone spreading and neurite outgrowth. In terms of tissue distribution, ubiquitously expressed.

It localises to the cytoplasm. The protein localises to the membrane. Functionally, may play a role in the regulation of RhoA GTPase by guanine nucleotide-binding alpha-12 (GNA12) and alpha-13 (GNA13). Acts as guanine nucleotide exchange factor (GEF) for RhoA GTPase and may act as GTPase-activating protein (GAP) for GNA12 and GNA13. Involved in neurotrophin-induced neurite outgrowth. The sequence is that of Rho guanine nucleotide exchange factor 11 (ARHGEF11) from Homo sapiens (Human).